A 395-amino-acid chain; its full sequence is Chaperone protein DnaJ 2 (395 aa).

Residues 10-75 (DYYADLGVSK…TKRREYDDLK (66 aa)) form the J domain. The CR-type zinc-finger motif lies at 165–242 (GTTIPVELTG…CRGRGTVRRT (78 aa)). Positions 178, 181, 194, 197, 216, 219, 230, and 233 each coordinate Zn(2+). 4 CXXCXGXG motif repeats span residues 178–185 (CNTCHGSG), 194–201 (CGQCNGSG), 216–223 (CTNCGGTG), and 230–237 (CVDCRGRG).

This sequence belongs to the DnaJ family. In terms of assembly, homodimer. The cofactor is Zn(2+).

Its subcellular location is the cytoplasm. Its function is as follows. Participates actively in the response to hyperosmotic and heat shock by preventing the aggregation of stress-denatured proteins and by disaggregating proteins, also in an autonomous, DnaK-independent fashion. Unfolded proteins bind initially to DnaJ; upon interaction with the DnaJ-bound protein, DnaK hydrolyzes its bound ATP, resulting in the formation of a stable complex. GrpE releases ADP from DnaK; ATP binding to DnaK triggers the release of the substrate protein, thus completing the reaction cycle. Several rounds of ATP-dependent interactions between DnaJ, DnaK and GrpE are required for fully efficient folding. Also involved, together with DnaK and GrpE, in the DNA replication of plasmids through activation of initiation proteins. This is Chaperone protein DnaJ 2 from Corynebacterium efficiens (strain DSM 44549 / YS-314 / AJ 12310 / JCM 11189 / NBRC 100395).